The sequence spans 182 residues: Adenine phosphoribosyltransferase (182 aa).

The protein belongs to the purine/pyrimidine phosphoribosyltransferase family. Homodimer.

It is found in the cytoplasm. It carries out the reaction AMP + diphosphate = 5-phospho-alpha-D-ribose 1-diphosphate + adenine. It functions in the pathway purine metabolism; AMP biosynthesis via salvage pathway; AMP from adenine: step 1/1. Its function is as follows. Catalyzes a salvage reaction resulting in the formation of AMP, that is energically less costly than de novo synthesis. The chain is Adenine phosphoribosyltransferase from Wolinella succinogenes (strain ATCC 29543 / DSM 1740 / CCUG 13145 / JCM 31913 / LMG 7466 / NCTC 11488 / FDC 602W) (Vibrio succinogenes).